Here is a 34-residue protein sequence, read N- to C-terminus: Photosystem II reaction center protein M (34 aa).

Residues 5–25 (ILGLTATALFIIIPTSFLLIL) form a helical membrane-spanning segment.

Belongs to the PsbM family. As to quaternary structure, PSII is composed of 1 copy each of membrane proteins PsbA, PsbB, PsbC, PsbD, PsbE, PsbF, PsbH, PsbI, PsbJ, PsbK, PsbL, PsbM, PsbT, PsbX, PsbY, PsbZ, Psb30/Ycf12, at least 3 peripheral proteins of the oxygen-evolving complex and a large number of cofactors. It forms dimeric complexes.

The protein localises to the plastid. It localises to the chloroplast thylakoid membrane. In terms of biological role, one of the components of the core complex of photosystem II (PSII). PSII is a light-driven water:plastoquinone oxidoreductase that uses light energy to abstract electrons from H(2)O, generating O(2) and a proton gradient subsequently used for ATP formation. It consists of a core antenna complex that captures photons, and an electron transfer chain that converts photonic excitation into a charge separation. This subunit is found at the monomer-monomer interface. The chain is Photosystem II reaction center protein M from Stigeoclonium helveticum (Green alga).